The sequence spans 560 residues: DNA ligase B (560 aa).

Catalysis depends on K124, which acts as the N6-AMP-lysine intermediate.

This sequence belongs to the NAD-dependent DNA ligase family. LigB subfamily.

It catalyses the reaction NAD(+) + (deoxyribonucleotide)n-3'-hydroxyl + 5'-phospho-(deoxyribonucleotide)m = (deoxyribonucleotide)n+m + AMP + beta-nicotinamide D-nucleotide.. Functionally, catalyzes the formation of phosphodiester linkages between 5'-phosphoryl and 3'-hydroxyl groups in double-stranded DNA using NAD as a coenzyme and as the energy source for the reaction. This chain is DNA ligase B, found in Escherichia coli (strain SMS-3-5 / SECEC).